The sequence spans 596 residues: Fructan 1-exohydrolase w3 (596 aa).

The signal sequence occupies residues 1–20; that stretch reads MAQAWAFLLPVLVLGSYVTS. The active site involves aspartate 75. 3 N-linked (GlcNAc...) asparagine glycosylation sites follow: asparagine 168, asparagine 236, and asparagine 248. Cysteine 446 and cysteine 492 form a disulfide bridge.

Belongs to the glycosyl hydrolase 32 family. Expressed in the stem, particularly the penultimate internode. Little expression is detected in roots and in the peduncle part of the stem.

The enzyme catalyses Hydrolysis of terminal, non-reducing (2-&gt;1)-linked beta-D-fructofuranose residues in fructans.. Inhibited by sucrose. Its function is as follows. Hydrolyzes inulin-type beta-(2,1)-fructans and beta-(2,1)-linkages in branched fructans. Has low activity against beta-(2,6)-linked fructans. May play a role as a beta-(2,1)-trimmer during graminan biosynthesis. In Triticum aestivum (Wheat), this protein is Fructan 1-exohydrolase w3.